We begin with the raw amino-acid sequence, 496 residues long: MDNNSVIGSEVDAEADESYVNAALEDGQTGKKSVQRNYATVLTEEDIRALMEIDVQSVSDFTSLSKAEATLLLSHLRWNVDCICKQWSAGAQSVRDSVGLLELDPPSDDNEYFCGACGESHPHKNLASVSCGHRICTRCWTSHINKIISEKPAAEWNLWLKCPVRVGLHASCPASVGLDTIERFASKREKFNYNQYLLRSYVDNRETMKWHPIQGSRCAIDLSPGSGNASVSCHRLVRFCWNCREDAHSPVDCKTAAKWLLENAVPCPKCKLRIPRNQDNSLKMKCLPCNYVFCWFCHVDWIEDMEGTGGDLHFCTFDAVLSDQRGKMSESDSNRYEDCYENWDSNELLMQKEQANLPKLDTIIQELSNTQLENVSQLKFILEAGLQIIECRRVLEWTYVYGYYLREDEVGKQNLLKDTQERLKKFVENLKHCLETNLQPFRYEEEPSKDFNAFRIKLTELTSLTRNHYENVVKDVENGLASVVSEGEASGSGRNQ.

The segment at 110–319 is TRIAD supradomain; that stretch reads NEYFCGACGE…GDLHFCTFDA (210 aa). C114, C117, C131, H133, C136, C139, C162, C172, C240, C243, H248, C253, C267, C270, C286, and C289 together coordinate Zn(2+). The segment at 114-172 adopts an RING-type 1 zinc-finger fold; it reads CGACGESHPHKNLASVSCGHRICTRCWTSHINKIISEKPAAEWNLWLKCPVRVGLHASC. The IBR-type zinc finger occupies 191 to 253; that stretch reads FNYNQYLLRS…REDAHSPVDC (63 aa). An RING-type 2; atypical zinc finger spans residues 267–297; sequence CPKCKLRIPRNQDNSLKMKCLPCNYVFCWFC.

It belongs to the RBR family. Ariadne subfamily. It depends on Zn(2+) as a cofactor. Preferentially expressed in roots.

The enzyme catalyses [E2 ubiquitin-conjugating enzyme]-S-ubiquitinyl-L-cysteine + [acceptor protein]-L-lysine = [E2 ubiquitin-conjugating enzyme]-L-cysteine + [acceptor protein]-N(6)-ubiquitinyl-L-lysine.. Its pathway is protein modification; protein ubiquitination. Its function is as follows. Might act as an E3 ubiquitin-protein ligase, or as part of E3 complex, which accepts ubiquitin from specific E2 ubiquitin-conjugating enzymes and then transfers it to substrates. In Arabidopsis thaliana (Mouse-ear cress), this protein is Probable E3 ubiquitin-protein ligase ARI12 (ARI12).